The primary structure comprises 164 residues: C-type lectin 1 (164 aa).

The first 23 residues, 1 to 23, serve as a signal peptide directing secretion; the sequence is MGRFLFASLGLLVVAFSLSGTGA. Cystine bridges form between Cys-27–Cys-38, Cys-55–Cys-154, and Cys-129–Cys-146. One can recognise a C-type lectin domain in the interval 34–155; the sequence is YNVSCYKLFY…CTLLHPFLCQ (122 aa). Residues Asn-35 and Asn-109 are each glycosylated (N-linked (GlcNAc...) asparagine). The Mannose-binding motif lies at 119–121; that stretch reads EPN. Ca(2+) is bound by residues Glu-127, Asn-142, and Asp-143.

Belongs to the true venom lectin family. In terms of tissue distribution, expressed by the venom gland.

The protein resides in the secreted. Mannose-binding lectin which recognizes specific carbohydrate structures and agglutinates a variety of animal cells by binding to cell-surface glycoproteins and glycolipids. May be a calcium-dependent lectin. This chain is C-type lectin 1, found in Hydrophis hardwickii (Hardwick's spine-bellied seasnake).